Reading from the N-terminus, the 94-residue chain is Small ribosomal subunit protein uS19 (94 aa).

This sequence belongs to the universal ribosomal protein uS19 family.

Protein S19 forms a complex with S13 that binds strongly to the 16S ribosomal RNA. The chain is Small ribosomal subunit protein uS19 from Acidobacterium capsulatum (strain ATCC 51196 / DSM 11244 / BCRC 80197 / JCM 7670 / NBRC 15755 / NCIMB 13165 / 161).